The sequence spans 219 residues: Protein-L-isoaspartate O-methyltransferase (219 aa).

Residue S64 is part of the active site.

It belongs to the methyltransferase superfamily. L-isoaspartyl/D-aspartyl protein methyltransferase family.

Its subcellular location is the cytoplasm. It catalyses the reaction [protein]-L-isoaspartate + S-adenosyl-L-methionine = [protein]-L-isoaspartate alpha-methyl ester + S-adenosyl-L-homocysteine. Its function is as follows. Catalyzes the methyl esterification of L-isoaspartyl residues in peptides and proteins that result from spontaneous decomposition of normal L-aspartyl and L-asparaginyl residues. It plays a role in the repair and/or degradation of damaged proteins. The sequence is that of Protein-L-isoaspartate O-methyltransferase from Chlorobaculum parvum (strain DSM 263 / NCIMB 8327) (Chlorobium vibrioforme subsp. thiosulfatophilum).